An 84-amino-acid polypeptide reads, in one-letter code: Cell division topological specificity factor (84 aa).

The protein belongs to the MinE family.

Prevents the cell division inhibition by proteins MinC and MinD at internal division sites while permitting inhibition at polar sites. This ensures cell division at the proper site by restricting the formation of a division septum at the midpoint of the long axis of the cell. In Burkholderia mallei (strain NCTC 10247), this protein is Cell division topological specificity factor.